The following is a 214-amino-acid chain: NADH-quinone oxidoreductase subunit C (214 aa).

This sequence belongs to the complex I 30 kDa subunit family. In terms of assembly, NDH-1 is composed of 14 different subunits. Subunits NuoB, C, D, E, F, and G constitute the peripheral sector of the complex.

The protein localises to the cell inner membrane. The enzyme catalyses a quinone + NADH + 5 H(+)(in) = a quinol + NAD(+) + 4 H(+)(out). Functionally, NDH-1 shuttles electrons from NADH, via FMN and iron-sulfur (Fe-S) centers, to quinones in the respiratory chain. The immediate electron acceptor for the enzyme in this species is believed to be ubiquinone. Couples the redox reaction to proton translocation (for every two electrons transferred, four hydrogen ions are translocated across the cytoplasmic membrane), and thus conserves the redox energy in a proton gradient. In Caulobacter sp. (strain K31), this protein is NADH-quinone oxidoreductase subunit C.